Reading from the N-terminus, the 155-residue chain is Myosin light chain alkali (155 aa).

2 EF-hand domains span residues 7–41 (REVENVEFVFEVMGSPGEGIDAFDLGDALRALNLN) and 80–115 (GCYEDFIECLKLYDKEENGTMLLAELQHALLALGES).

In terms of assembly, myosin is a hexamer of 2 heavy chains and 4 light chains.

The polypeptide is Myosin light chain alkali (Mlc1) (Drosophila virilis (Fruit fly)).